Consider the following 423-residue polypeptide: Histidine--tRNA ligase (423 aa).

This sequence belongs to the class-II aminoacyl-tRNA synthetase family. In terms of assembly, homodimer.

The protein resides in the cytoplasm. It catalyses the reaction tRNA(His) + L-histidine + ATP = L-histidyl-tRNA(His) + AMP + diphosphate + H(+). This chain is Histidine--tRNA ligase, found in Laribacter hongkongensis (strain HLHK9).